Here is a 459-residue protein sequence, read N- to C-terminus: Argininosuccinate lyase (459 aa).

Belongs to the lyase 1 family. Argininosuccinate lyase subfamily.

The protein localises to the cytoplasm. It catalyses the reaction 2-(N(omega)-L-arginino)succinate = fumarate + L-arginine. Its pathway is amino-acid biosynthesis; L-arginine biosynthesis; L-arginine from L-ornithine and carbamoyl phosphate: step 3/3. The protein is Argininosuccinate lyase of Staphylococcus aureus (strain MRSA252).